A 381-amino-acid polypeptide reads, in one-letter code: rRNA adenine N-6-methyltransferase (381 aa).

Over residues 1 to 19 the composition is skewed to basic and acidic residues; the sequence is MSSSDEQPRPRRRNQDRQH. Residues 1–42 are disordered; sequence MSSSDEQPRPRRRNQDRQHPNQNRPVLGRTERDRNRRQFGQN. Residues asparagine 42, leucine 44, glycine 69, glutamate 90, aspartate 115, and alanine 131 each coordinate S-adenosyl-L-methionine. The interval 282–381 is disordered; sequence RLDQKNEPRG…PGRRGGPGQR (100 aa). Residues 301–358 are compositionally biased toward basic and acidic residues; it reads GGRDHGDRRTGGQDRGDRRTGGRDHRDRQASGHGDRRSSGRNRDDGRTGEREQGDQGG. Residues 359-381 are compositionally biased toward gly residues; it reads RRGPSGGGRTGGRPGRRGGPGQR.

This sequence belongs to the class I-like SAM-binding methyltransferase superfamily. rRNA adenine N(6)-methyltransferase family.

The catalysed reaction is adenosine(2085) in 23S rRNA + 2 S-adenosyl-L-methionine = N(6)-dimethyladenosine(2085) in 23S rRNA + 2 S-adenosyl-L-homocysteine + 2 H(+). Its function is as follows. This protein produces a dimethylation of the adenine residue at position 2085 in 23S rRNA, resulting in reduced affinity between ribosomes and macrolide-lincosamide-streptogramin B antibiotics. The protein is rRNA adenine N-6-methyltransferase (ermE) of Saccharopolyspora erythraea (strain ATCC 11635 / DSM 40517 / JCM 4748 / NBRC 13426 / NCIMB 8594 / NRRL 2338).